We begin with the raw amino-acid sequence, 316 residues long: 4-hydroxy-3-methylbut-2-enyl diphosphate reductase (316 aa).

Cysteine 12 contacts [4Fe-4S] cluster. Residues histidine 43 and histidine 81 each contribute to the (2E)-4-hydroxy-3-methylbut-2-enyl diphosphate site. Residues histidine 43 and histidine 81 each contribute to the dimethylallyl diphosphate site. Residues histidine 43 and histidine 81 each coordinate isopentenyl diphosphate. Cysteine 103 is a [4Fe-4S] cluster binding site. Position 131 (histidine 131) interacts with (2E)-4-hydroxy-3-methylbut-2-enyl diphosphate. Position 131 (histidine 131) interacts with dimethylallyl diphosphate. Histidine 131 provides a ligand contact to isopentenyl diphosphate. Glutamate 133 (proton donor) is an active-site residue. Threonine 170 is a binding site for (2E)-4-hydroxy-3-methylbut-2-enyl diphosphate. Cysteine 198 provides a ligand contact to [4Fe-4S] cluster. (2E)-4-hydroxy-3-methylbut-2-enyl diphosphate contacts are provided by serine 226, asparagine 228, and serine 271. Serine 226, asparagine 228, and serine 271 together coordinate dimethylallyl diphosphate. Residues serine 226, asparagine 228, and serine 271 each contribute to the isopentenyl diphosphate site.

Belongs to the IspH family. It depends on [4Fe-4S] cluster as a cofactor.

It carries out the reaction isopentenyl diphosphate + 2 oxidized [2Fe-2S]-[ferredoxin] + H2O = (2E)-4-hydroxy-3-methylbut-2-enyl diphosphate + 2 reduced [2Fe-2S]-[ferredoxin] + 2 H(+). The enzyme catalyses dimethylallyl diphosphate + 2 oxidized [2Fe-2S]-[ferredoxin] + H2O = (2E)-4-hydroxy-3-methylbut-2-enyl diphosphate + 2 reduced [2Fe-2S]-[ferredoxin] + 2 H(+). It participates in isoprenoid biosynthesis; dimethylallyl diphosphate biosynthesis; dimethylallyl diphosphate from (2E)-4-hydroxy-3-methylbutenyl diphosphate: step 1/1. It functions in the pathway isoprenoid biosynthesis; isopentenyl diphosphate biosynthesis via DXP pathway; isopentenyl diphosphate from 1-deoxy-D-xylulose 5-phosphate: step 6/6. In terms of biological role, catalyzes the conversion of 1-hydroxy-2-methyl-2-(E)-butenyl 4-diphosphate (HMBPP) into a mixture of isopentenyl diphosphate (IPP) and dimethylallyl diphosphate (DMAPP). Acts in the terminal step of the DOXP/MEP pathway for isoprenoid precursor biosynthesis. The sequence is that of 4-hydroxy-3-methylbut-2-enyl diphosphate reductase from Bacillus thuringiensis (strain Al Hakam).